Consider the following 173-residue polypeptide: Shikimate kinase (173 aa).

An ATP-binding site is contributed by 10–15 (GSGKTT). Mg(2+) is bound at residue Thr-14. Substrate-binding residues include Asp-32, Arg-56, and Gly-78. Arg-117 serves as a coordination point for ATP. A substrate-binding site is contributed by Arg-135.

The protein belongs to the shikimate kinase family. In terms of assembly, monomer. Mg(2+) is required as a cofactor.

It localises to the cytoplasm. It catalyses the reaction shikimate + ATP = 3-phosphoshikimate + ADP + H(+). The protein operates within metabolic intermediate biosynthesis; chorismate biosynthesis; chorismate from D-erythrose 4-phosphate and phosphoenolpyruvate: step 5/7. Catalyzes the specific phosphorylation of the 3-hydroxyl group of shikimic acid using ATP as a cosubstrate. The chain is Shikimate kinase from Limosilactobacillus fermentum (strain NBRC 3956 / LMG 18251) (Lactobacillus fermentum).